Here is a 156-residue protein sequence, read N- to C-terminus: Perlucin-like protein (156 aa).

A signal peptide spans 1-22; the sequence is MGKLTVVGILTLFIFYIVAASG. Cystine bridges form between Cys-30–Cys-41, Cys-58–Cys-156, and Cys-131–Cys-147. Residues 37-156 form the C-type lectin domain; it reads YKTNCYFFSP…CNTDQMGYIC (120 aa).

As to expression, component of the organic matrix of calcified shell layers like nacre and prisms.

The protein resides in the secreted. This Mytilus galloprovincialis (Mediterranean mussel) protein is Perlucin-like protein.